A 234-amino-acid chain; its full sequence is Synaptogyrin-1 (234 aa).

Met-1 carries the post-translational modification N-acetylmethionine. At 1-23 the chain is on the cytoplasmic side; that stretch reads MEGGAYGAGKAGGAFDPYTLVRQ. Positions 20-173 constitute an MARVEL domain; it reads LVRQPHTILR…QAVLAFQRYQ (154 aa). The chain crosses the membrane as a helical span at residues 24 to 44; the sequence is PHTILRVVSWVFSIVVFGSIV. The Lumenal segment spans residues 45–71; the sequence is NEGYLNNPEEEEEFCIYNRNPNACSYG. The chain crosses the membrane as a helical span at residues 72 to 92; sequence VTVGVLAFLTCLVYLALDVYF. At 93-104 the chain is on the cytoplasmic side; it reads PQISSVKDRKKA. Residues 105 to 125 form a helical membrane-spanning segment; the sequence is VLSDIGVSAFWAFFWFVGFCF. At 126–148 the chain is on the lumenal side; it reads LANQWQVSKPKDNPLNEGTDAAR. Residues 149–169 form a helical membrane-spanning segment; it reads AAIAFSFFSIFTWAGQAVLAF. At 170-234 the chain is on the cytoplasmic side; the sequence is QRYQIGADSA…EPQGYQSQGY (65 aa). The tract at residues 201–234 is disordered; sequence EPSAGSDPTGMGGTYQHPANAFDAEPQGYQSQGY.

The protein belongs to the synaptogyrin family. Nervous system (at protein level).

Its subcellular location is the cytoplasmic vesicle. It localises to the secretory vesicle. The protein resides in the synaptic vesicle membrane. The protein localises to the melanosome. Functionally, may play a role in regulated exocytosis. Modulates the localization of synaptophysin/SYP into synaptic-like microvesicles and may therefore play a role in synaptic-like microvesicle formation and/or maturation. Involved in the regulation of short-term and long-term synaptic plasticity. The protein is Synaptogyrin-1 of Rattus norvegicus (Rat).